A 215-amino-acid chain; its full sequence is Adenylate kinase (215 aa).

Position 10–15 (10–15 (GAGKGT)) interacts with ATP. Residues 30–59 (STGDIFRKNISENTPLGMEARSYMDKGLLV) are NMP. AMP is bound by residues Thr-31, Arg-36, 57-59 (LLV), 85-88 (GFPR), and Gln-92. Residues 126–163 (GRRVCTSCGGSFHIKFNPPTIDGKCNLCGSDIVQRKDD) are LID. Arg-127 is an ATP binding site. 2 residues coordinate Zn(2+): Cys-130 and Cys-133. 136–137 (SF) contacts ATP. Residues Cys-150 and Cys-153 each contribute to the Zn(2+) site. AMP-binding residues include Arg-160 and Arg-171. ATP is bound at residue Lys-199.

The protein belongs to the adenylate kinase family. As to quaternary structure, monomer.

The protein resides in the cytoplasm. The enzyme catalyses AMP + ATP = 2 ADP. It participates in purine metabolism; AMP biosynthesis via salvage pathway; AMP from ADP: step 1/1. Catalyzes the reversible transfer of the terminal phosphate group between ATP and AMP. Plays an important role in cellular energy homeostasis and in adenine nucleotide metabolism. This is Adenylate kinase from Clostridium botulinum (strain Eklund 17B / Type B).